The following is a 634-amino-acid chain: Beta-ketoacyl-[acyl-carrier-protein] synthase FabY (634 aa).

One can recognise a Ketosynthase family 3 (KS3) domain in the interval 78–546; that stretch reads ERIFASTLVR…GNNASGVVLS (469 aa). Catalysis depends on for beta-ketoacyl synthase activity residues C281, H434, and H472.

The protein belongs to the thiolase-like superfamily. Beta-ketoacyl-ACP synthases family. As to quaternary structure, homodimer.

It catalyses the reaction malonyl-[ACP] + acetyl-CoA + H(+) = 3-oxobutanoyl-[ACP] + CO2 + CoA. It functions in the pathway lipid metabolism; fatty acid biosynthesis. Involved in the initiation of the fatty acid biosynthesis. Catalyzes the condensation of acetyl coenzyme A (acetyl-CoA) with malonyl-acyl carrier protein (ACP) to make the fatty acid synthesis (FAS) primer beta-acetoacetyl-ACP. It can also use short-chain acyl-CoA as substrates, including butyryl-CoA, and hexanoyl-CoA, but does not use any of the longer chain acyl-CoA substrates. The protein is Beta-ketoacyl-[acyl-carrier-protein] synthase FabY (fabY) of Pseudomonas aeruginosa (strain ATCC 15692 / DSM 22644 / CIP 104116 / JCM 14847 / LMG 12228 / 1C / PRS 101 / PAO1).